The following is a 79-amino-acid chain: Secretory calcium-binding phosphoprotein proline-glutamine rich 1 (79 aa).

A signal peptide spans 1–15; that stretch reads MKFLILAGLLSTATA.

It is found in the secreted. Functionally, tooth-associated epithelia protein that may participate in structuring the basal lamina at cell-tooth interface. The protein is Secretory calcium-binding phosphoprotein proline-glutamine rich 1 of Homo sapiens (Human).